A 415-amino-acid polypeptide reads, in one-letter code: WD repeat-containing protein JIP5 (415 aa).

WD repeat units lie at residues 5–44 (DVGS…KEQA), 104–142 (AHDS…CVRE), 145–184 (QHFD…PEPF), 189–228 (DQDD…GDCV), and 233–282 (GHPL…VVAD). The segment at 328–415 (GALGVTNENE…DVENAFFDEL (88 aa)) is disordered. Over residues 337-346 (EQSDEDEEMD) the composition is skewed to acidic residues. Positions 358–367 (DGSGSSSSGE) are enriched in low complexity. Over residues 390-405 (EQKPLDVDKPKGRNEI) the composition is skewed to basic and acidic residues.

Belongs to the WD repeat WDR55 family.

The protein resides in the nucleus. Its subcellular location is the nucleolus. The polypeptide is WD repeat-containing protein JIP5 (JIP5) (Laccaria bicolor (strain S238N-H82 / ATCC MYA-4686) (Bicoloured deceiver)).